A 304-amino-acid chain; its full sequence is Dihydroorotate dehydrogenase B (NAD(+)), catalytic subunit (304 aa).

Residues Ser-22 and 46 to 47 (KG) each bind FMN. Substrate-binding positions include Lys-46 and 70 to 74 (NAIGL). The FMN site is built by Asn-100 and Asn-128. Asn-128 contacts substrate. Cys-131 (nucleophile) is an active-site residue. FMN is bound by residues Lys-166 and Ile-192. 193-194 (NT) lines the substrate pocket. Residues Gly-218, 244-245 (GG), and 266-267 (GT) contribute to the FMN site.

The protein belongs to the dihydroorotate dehydrogenase family. Type 1 subfamily. In terms of assembly, heterotetramer of 2 PyrK and 2 PyrD type B subunits. Requires FMN as cofactor.

Its subcellular location is the cytoplasm. The catalysed reaction is (S)-dihydroorotate + NAD(+) = orotate + NADH + H(+). Its pathway is pyrimidine metabolism; UMP biosynthesis via de novo pathway; orotate from (S)-dihydroorotate (NAD(+) route): step 1/1. Its function is as follows. Catalyzes the conversion of dihydroorotate to orotate with NAD(+) as electron acceptor. This chain is Dihydroorotate dehydrogenase B (NAD(+)), catalytic subunit (pyrD), found in Pelobacter propionicus (strain DSM 2379 / NBRC 103807 / OttBd1).